The chain runs to 63 residues: Large ribosomal subunit protein uL29 (63 aa).

Belongs to the universal ribosomal protein uL29 family.

This chain is Large ribosomal subunit protein uL29, found in Bordetella petrii (strain ATCC BAA-461 / DSM 12804 / CCUG 43448).